The primary structure comprises 502 residues: Lysine--tRNA ligase (502 aa).

Positions 413 and 420 each coordinate Mg(2+).

This sequence belongs to the class-II aminoacyl-tRNA synthetase family. Homodimer. Mg(2+) is required as a cofactor.

The protein resides in the cytoplasm. The enzyme catalyses tRNA(Lys) + L-lysine + ATP = L-lysyl-tRNA(Lys) + AMP + diphosphate. In Aromatoleum aromaticum (strain DSM 19018 / LMG 30748 / EbN1) (Azoarcus sp. (strain EbN1)), this protein is Lysine--tRNA ligase.